The sequence spans 284 residues: Para-Rep C3 (284 aa).

One can recognise a CRESS-DNA virus Rep endonuclease domain in the interval 3 to 98 (TVQSTCWVFT…IEGPWEYGKY (96 aa)). The RCR-1 motif lies at 10 to 13 (VFTL). A divalent metal cation contacts are provided by E36 and H42. Positions 42 to 44 (HLQ) match the RCR-2 motif. Positions 51–71 (AQQSLGQMKAIIPGAHFEKMR) match the Nuclear localization signal motif. The active-site For DNA cleavage activity is the Y81. An RCR-3 motif is present at residues 81–84 (YAMK). An a divalent metal cation-binding site is contributed by D86. The Nuclear localization signal signature appears at 98 to 104 (YIKKGSH). 174-182 (GPKGGEGKS) is a binding site for ATP.

It belongs to the nanoviridea/circoviridae replication-associated protein family. As to quaternary structure, homooligomer (Potential). Rep binds to repeated DNA motifs (iterons). Mg(2+) serves as cofactor. Requires Mn(2+) as cofactor.

The protein localises to the host nucleus. The enzyme catalyses ATP + H2O = ADP + phosphate + H(+). Initiates and terminates the replication only of its own subviral DNA molecule. The closed circular ssDNA genome is first converted to a superhelical dsDNA. Rep binds a specific hairpin at the genome origin of replication. Introduces an endonucleolytic nick within the intergenic region of the genome, thereby initiating the rolling circle replication (RCR). Following cleavage, binds covalently to the 5'-phosphate of DNA as a tyrosyl ester. The cleavage gives rise to a free 3'-OH that serves as a primer for the cellular DNA polymerase. The polymerase synthesizes the (+) strand DNA by rolling circle mechanism. After one round of replication, a Rep-catalyzed nucleotidyl transfer reaction releases a circular single-stranded virus genome, thereby terminating the replication. Displays origin-specific DNA cleavage, nucleotidyl transferase, ATPase and helicase activities. The sequence is that of Para-Rep C3 (C3) from Milk vetch dwarf C3 alphasatellite (MVDC3A).